Consider the following 271-residue polypeptide: Putative phosphoenolpyruvate synthase regulatory protein (271 aa).

ADP is bound at residue 152-159 (GASRSGKT).

This sequence belongs to the pyruvate, phosphate/water dikinase regulatory protein family. PSRP subfamily.

It carries out the reaction [pyruvate, water dikinase] + ADP = [pyruvate, water dikinase]-phosphate + AMP + H(+). The catalysed reaction is [pyruvate, water dikinase]-phosphate + phosphate + H(+) = [pyruvate, water dikinase] + diphosphate. In terms of biological role, bifunctional serine/threonine kinase and phosphorylase involved in the regulation of the phosphoenolpyruvate synthase (PEPS) by catalyzing its phosphorylation/dephosphorylation. This is Putative phosphoenolpyruvate synthase regulatory protein from Marinobacter nauticus (strain ATCC 700491 / DSM 11845 / VT8) (Marinobacter aquaeolei).